Reading from the N-terminus, the 236-residue chain is Glycosylphosphatidylinositol anchor biosynthesis protein 11 (236 aa).

A run of 2 helical transmembrane segments spans residues 40–60 and 65–85; these read TLTIPFHSALLIFGLYKFGLT and GVMLKGIFSLIPLQLLYGYLI. Asparagine 99 is a glycosylation site (N-linked (GlcNAc...) asparagine). A run of 4 helical transmembrane segments spans residues 107–127, 139–159, 184–204, and 215–235; these read LLAGGIVISLVLSVPLFVALI, ETYLLSIHLSLLIFYPSLVLY, ILLSAVLAVIGTWFGVIPIPL, and ITLLTGAYIGSFVGGIACFLF.

Belongs to the PIGF family.

It is found in the endoplasmic reticulum membrane. Its pathway is glycolipid biosynthesis; glycosylphosphatidylinositol-anchor biosynthesis. Acts in the GPI biosynthetic pathway between GlcNAc-PI synthesis and GPI transfer to protein. This Debaryomyces hansenii (strain ATCC 36239 / CBS 767 / BCRC 21394 / JCM 1990 / NBRC 0083 / IGC 2968) (Yeast) protein is Glycosylphosphatidylinositol anchor biosynthesis protein 11 (GPI11).